Consider the following 170-residue polypeptide: Adenine phosphoribosyltransferase (170 aa).

It belongs to the purine/pyrimidine phosphoribosyltransferase family. In terms of assembly, homodimer.

It localises to the cytoplasm. The catalysed reaction is AMP + diphosphate = 5-phospho-alpha-D-ribose 1-diphosphate + adenine. It participates in purine metabolism; AMP biosynthesis via salvage pathway; AMP from adenine: step 1/1. Catalyzes a salvage reaction resulting in the formation of AMP, that is energically less costly than de novo synthesis. In Flavobacterium johnsoniae (strain ATCC 17061 / DSM 2064 / JCM 8514 / BCRC 14874 / CCUG 350202 / NBRC 14942 / NCIMB 11054 / UW101) (Cytophaga johnsonae), this protein is Adenine phosphoribosyltransferase.